Here is a 249-residue protein sequence, read N- to C-terminus: Sodium channel modifier 1 (249 aa).

Positions 4-20 match the Bipartite nuclear localization signal motif; sequence KREGDDQSQLNILKKRR. The Matrin-type zinc finger occupies 42–74; the sequence is YSCLVCSHRPVFDTVDMLVVHRKGKRHLEGMKW. Positions 94-103 are enriched in basic and acidic residues; it reads YVKAEDDRQE. Disordered stretches follow at residues 94-116, 128-199, and 228-249; these read YVKA…QTRK, YSSC…PLTE, and ENVE…SESS. Positions 104-115 are enriched in polar residues; that stretch reads PSSSAPLLTQTR. The span at 134-149 shows a compositional bias: basic and acidic residues; sequence KASERSESSSKEHRND. Residues 150–170 are compositionally biased toward polar residues; sequence LANSHLSMRTESNDSRTTVHQ. The segment covering 230-239 has biased composition (acidic residues); that stretch reads VEFDSDEEEP.

As to quaternary structure, component of the minor spliceosome, which splices U12-type introns.

Its subcellular location is the nucleus. It localises to the nucleoplasm. It is found in the nucleus speckle. Its function is as follows. As a component of the minor spliceosome, involved in the splicing of U12-type introns in pre-mRNAs. The chain is Sodium channel modifier 1 (scnm1) from Danio rerio (Zebrafish).